We begin with the raw amino-acid sequence, 668 residues long: DNA damage-responsive serine/threonine-protein kinase RqkA (668 aa).

The Protein kinase domain occupies 13–272; it reads YELLALLGEG…SGAALAHLWA (260 aa). ATP contacts are provided by residues 19 to 27 and K42; that span reads LGEGGSAQV. The active-site Proton acceptor is D137.

Belongs to the protein kinase superfamily. Ser/Thr protein kinase family. Pyrroloquinoline quinone is required as a cofactor. In terms of processing, autophosphorylated.

The enzyme catalyses L-seryl-[protein] + ATP = O-phospho-L-seryl-[protein] + ADP + H(+). It catalyses the reaction L-threonyl-[protein] + ATP = O-phospho-L-threonyl-[protein] + ADP + H(+). Autokinase activity is stimulated by DNA damage. Stimulated by PQQ and DNA ends in vitro. Functionally, plays an important role in radiation resistance and DNA double-strand break (DSB) repair. Involved in transcriptional regulation of genes important for bacterial stress response. Phosphorylates PprA in vitro. The sequence is that of DNA damage-responsive serine/threonine-protein kinase RqkA (rqkA) from Deinococcus radiodurans (strain ATCC 13939 / DSM 20539 / JCM 16871 / CCUG 27074 / LMG 4051 / NBRC 15346 / NCIMB 9279 / VKM B-1422 / R1).